A 454-amino-acid chain; its full sequence is Protein disulfide-isomerase TMX3 (454 aa).

Positions 1–24 are cleaved as a signal peptide; it reads MAAWKSWTALRLCATVVVLDMVVC. The 104-residue stretch at 25-128 folds into the Thioredoxin domain; sequence KGFVEDLDES…KDDIIEFAHR (104 aa). Residues 25 to 375 are Lumenal-facing; it reads KGFVEDLDES…TIVSIFKSSP (351 aa). Catalysis depends on nucleophile residues Cys-53 and Cys-56. Cysteines 53 and 56 form a disulfide. Residues Asn-258 and Asn-313 are each glycosylated (N-linked (GlcNAc...) asparagine). Residues 376–396 traverse the membrane as a helical segment; the sequence is LMGCFLFGLPLGVISIMCYGI. Residues 397-454 lie on the Cytoplasmic side of the membrane; sequence YTADTDGGYIEERYEVSKSENENQEQIEESKEQQEPSSGGSVVPTVQEPKDVLEKKKD. Residues 412 to 454 are disordered; it reads VSKSENENQEQIEESKEQQEPSSGGSVVPTVQEPKDVLEKKKD. Positions 444–454 are enriched in basic and acidic residues; sequence EPKDVLEKKKD. Positions 451-454 match the Di-lysine motif motif; sequence KKKD.

The protein belongs to the protein disulfide isomerase family. In terms of processing, N-glycosylated. In terms of tissue distribution, widely expressed. Expressed in brain, testis, lung, skin, kidney, uterus, bone, stomach, liver, prostate, placenta, eye and muscle.

Its subcellular location is the endoplasmic reticulum membrane. It carries out the reaction Catalyzes the rearrangement of -S-S- bonds in proteins.. In terms of biological role, probable disulfide isomerase, which participates in the folding of proteins containing disulfide bonds. May act as a dithiol oxidase. Acts as a regulator of endoplasmic reticulum-mitochondria contact sites via its ability to regulate redox signals. This chain is Protein disulfide-isomerase TMX3 (TMX3), found in Homo sapiens (Human).